Reading from the N-terminus, the 130-residue chain is Small ribosomal subunit protein uS8 (130 aa).

The protein belongs to the universal ribosomal protein uS8 family. As to quaternary structure, part of the 30S ribosomal subunit. Contacts proteins S5 and S12.

One of the primary rRNA binding proteins, it binds directly to 16S rRNA central domain where it helps coordinate assembly of the platform of the 30S subunit. In Cronobacter sakazakii (strain ATCC BAA-894) (Enterobacter sakazakii), this protein is Small ribosomal subunit protein uS8.